We begin with the raw amino-acid sequence, 193 residues long: MPNWGGGKKCGVCQKTVYFAEEVQCEGNSFHKSCFLCMVCKKNLDSTTVAVHGEEIYCKSCYGKKYGPKGYGYGQGAGTLSTDKGESLGIKHEEAPGHRPTTNPNASKFAQKIGGSERCPRCSQAVYAAEKVIGAGKSWHKACFRCAKCGKGLESTTLADKDGEIYCKGCYAKNFGPKGFGFGQGAGALVHSE.

The 52-residue stretch at 10–61 folds into the LIM zinc-binding 1 domain; sequence CGVCQKTVYFAEEVQCEGNSFHKSCFLCMVCKKNLDSTTVAVHGEEIYCKSC. The Nuclear localization signal signature appears at 64-69; that stretch reads KKYGPK. Serine 81 is subject to Phosphoserine. At lysine 84 the chain carries N6-acetyllysine. Lysine 91 participates in a covalent cross-link: Glycyl lysine isopeptide (Lys-Gly) (interchain with G-Cter in SUMO2). An N6-acetyllysine mark is found at lysine 112, lysine 131, lysine 137, and lysine 161. Residues 119 to 170 form the LIM zinc-binding 2 domain; sequence CPRCSQAVYAAEKVIGAGKSWHKACFRCAKCGKGLESTTLADKDGEIYCKGC. Phosphoserine is present on serine 192.

Interacts with ASCC1; ASCC2 and TRIP4.

It localises to the nucleus. Functionally, could play a role in neuronal development. This is Cysteine and glycine-rich protein 1 (CSRP1) from Homo sapiens (Human).